A 341-amino-acid polypeptide reads, in one-letter code: MRLGRVCPRGPGKVRSPRHRFSCTLFVSTTGSSCGHHGPQLAASSNPSVLPGLHEQPPQASHSRPLNGLLRLGIPGDMYARSEPFAPGPMARSDTLATATALHGYGGMNLTMNLTAPHGPGAFFRYMRQPIKQELICKWLGDDSPMSPRPCSKTFSTMHELVTHVTVEHVGGPEQANHICFWEECPRQGKPFKAKYKLVNHIRVHTGEKPFPCPFPGCGKVFARSENLKIHKRTHTGEKPFRCEFEGCERRFANSSDRKKHSHVHTSDKPYMCKVRGCDKCYTHPSSLRKHMKVHGRSPPPSSGYDSAITSALASPSLESGREPSVACSAAVVVRGTDVSE.

Residues 36-66 form a disordered region; the sequence is HHGPQLAASSNPSVLPGLHEQPPQASHSRPL. Residues 135 to 169 form a C2H2-type 1; atypical zinc finger; that stretch reads LICKWLGDDSPMSPRPCSKTFSTMHELVTHVTVEH. A C2H2-type 2; atypical zinc finger spans residues 178–205; the sequence is HICFWEECPRQGKPFKAKYKLVNHIRVH. 3 consecutive C2H2-type zinc fingers follow at residues 211 to 235, 241 to 265, and 271 to 295; these read FPCPFPGCGKVFARSENLKIHKRTH, FRCEFEGCERRFANSSDRKKHSHVH, and YMCKVRGCDKCYTHPSSLRKHMKVH. The interval 289–309 is disordered; it reads RKHMKVHGRSPPPSSGYDSAI.

Belongs to the GLI C2H2-type zinc-finger protein family. Exclusively expressed in the cerebellum.

The protein resides in the nucleus. Functionally, binds to DNA. This Mus musculus (Mouse) protein is Zinc finger protein ZIC 4 (Zic4).